The chain runs to 272 residues: F-actin-capping protein subunit beta (272 aa).

The protein belongs to the F-actin-capping protein beta subunit family. In terms of assembly, component of the F-actin capping complex, composed of a heterodimer of an alpha and a beta subunit.

It is found in the cytoplasm. Its subcellular location is the cytoskeleton. Its function is as follows. F-actin-capping proteins bind in a Ca(2+)-independent manner to the fast growing ends of actin filaments (barbed end) thereby blocking the exchange of subunits at these ends. Unlike other capping proteins (such as gelsolin and severin), these proteins do not sever actin filaments. The polypeptide is F-actin-capping protein subunit beta (acpA) (Dictyostelium discoideum (Social amoeba)).